The chain runs to 29 residues: Dermaseptin-J5 (29 aa).

At Val-29 the chain carries Valine amide.

In terms of tissue distribution, expressed by the skin glands.

The protein localises to the secreted. Functionally, has antimicrobial activity. In Phasmahyla jandaia (Jandaia leaf frog), this protein is Dermaseptin-J5.